The chain runs to 60 residues: MPNPKRRHSKKRTSTRRAHDALKQPGLSECPNCHEPKVPHRVCPHCGQYKGREVVEVVAE.

Residues 1-16 show a composition bias toward basic residues; the sequence is MPNPKRRHSKKRTSTR. Residues 1–28 form a disordered region; it reads MPNPKRRHSKKRTSTRRAHDALKQPGLS.

The protein belongs to the bacterial ribosomal protein bL32 family.

This Solibacter usitatus (strain Ellin6076) protein is Large ribosomal subunit protein bL32.